The chain runs to 439 residues: Cobyrinate a,c-diamide synthase (439 aa).

Residues 214–235 (ETARAPPEVATTERNTGDSPAD) are disordered. The region spanning 237–428 (RVAVAQDSAF…CHCHGESGAF (192 aa)) is the GATase cobBQ-type domain. Cys-317 acts as the Nucleophile in catalysis.

This sequence belongs to the CobB/CbiA family. The cofactor is Mg(2+).

The catalysed reaction is cob(II)yrinate + 2 L-glutamine + 2 ATP + 2 H2O = cob(II)yrinate a,c diamide + 2 L-glutamate + 2 ADP + 2 phosphate + 2 H(+). It functions in the pathway cofactor biosynthesis; adenosylcobalamin biosynthesis; cob(II)yrinate a,c-diamide from sirohydrochlorin (anaerobic route): step 10/10. Functionally, catalyzes the ATP-dependent amidation of the two carboxylate groups at positions a and c of cobyrinate, using either L-glutamine or ammonia as the nitrogen source. This Haloarcula marismortui (strain ATCC 43049 / DSM 3752 / JCM 8966 / VKM B-1809) (Halobacterium marismortui) protein is Cobyrinate a,c-diamide synthase.